A 314-amino-acid chain; its full sequence is N-acyl-aromatic-L-amino acid amidohydrolase (carboxylate-forming) B (314 aa).

The Zn(2+) site is built by His19 and Glu22. Substrate-binding positions include Arg63 and 70 to 71; that span reads NR. His116 is a Zn(2+) binding site. The substrate site is built by Glu178 and Tyr289.

It belongs to the AspA/AstE family. Aspartoacylase subfamily. In terms of assembly, homotetramer. The cofactor is Zn(2+).

The protein localises to the apical cell membrane. It localises to the cytoplasm. It carries out the reaction an N-acyl-aromatic L-alpha-amino acid + H2O = an aromatic L-alpha-amino acid + a carboxylate. The catalysed reaction is an N-acetyl-L-cysteine-S-conjugate + H2O = an S-substituted L-cysteine + acetate. Plays an important role in deacetylating mercapturic acids in kidney proximal tubules. The polypeptide is N-acyl-aromatic-L-amino acid amidohydrolase (carboxylate-forming) B (acy3.2) (Danio rerio (Zebrafish)).